Consider the following 586-residue polypeptide: Exopolysaccharide phosphotransferase SCO6023 (586 aa).

It belongs to the stealth family.

In Streptomyces coelicolor (strain ATCC BAA-471 / A3(2) / M145), this protein is Exopolysaccharide phosphotransferase SCO6023.